The sequence spans 150 residues: UPF0506 protein SJCHGC02380 (150 aa).

Positions 1-18 are cleaved as a signal peptide; it reads MNTCIQLLILCLVTVINS. N-linked (GlcNAc...) asparagine glycosylation is found at asparagine 20, asparagine 24, asparagine 36, asparagine 48, asparagine 52, and asparagine 110. 3 disulfides stabilise this stretch: cysteine 116–cysteine 130, cysteine 123–cysteine 134, and cysteine 129–cysteine 139.

This sequence belongs to the UPF0506 family.

The protein resides in the secreted. This Schistosoma japonicum (Blood fluke) protein is UPF0506 protein SJCHGC02380.